The following is a 405-amino-acid chain: Acetylornithine/succinyldiaminopimelate aminotransferase (405 aa).

Pyridoxal 5'-phosphate-binding positions include 108–109 and Phe-141; that span reads GT. Residue Arg-144 coordinates N(2)-acetyl-L-ornithine. 226–229 is a binding site for pyridoxal 5'-phosphate; that stretch reads DEVQ. Lys-255 carries the N6-(pyridoxal phosphate)lysine modification. Ser-283 contributes to the N(2)-acetyl-L-ornithine binding site. Thr-284 provides a ligand contact to pyridoxal 5'-phosphate.

This sequence belongs to the class-III pyridoxal-phosphate-dependent aminotransferase family. ArgD subfamily. Homodimer. The cofactor is pyridoxal 5'-phosphate.

It is found in the cytoplasm. The enzyme catalyses N(2)-acetyl-L-ornithine + 2-oxoglutarate = N-acetyl-L-glutamate 5-semialdehyde + L-glutamate. It catalyses the reaction N-succinyl-(2S,6S)-2,6-diaminopimelate + 2-oxoglutarate = (S)-2-succinylamino-6-oxoheptanedioate + L-glutamate. Its pathway is amino-acid biosynthesis; L-arginine biosynthesis; N(2)-acetyl-L-ornithine from L-glutamate: step 4/4. The protein operates within amino-acid biosynthesis; L-lysine biosynthesis via DAP pathway; LL-2,6-diaminopimelate from (S)-tetrahydrodipicolinate (succinylase route): step 2/3. In terms of biological role, involved in both the arginine and lysine biosynthetic pathways. The chain is Acetylornithine/succinyldiaminopimelate aminotransferase from Salmonella typhi.